We begin with the raw amino-acid sequence, 485 residues long: Peroxisomal catalase (485 aa).

Residues His53 and Asn126 contribute to the active site. Tyr336 contacts heme.

Belongs to the catalase family. Homotetramer. The cofactor is heme.

Its subcellular location is the peroxisome matrix. The enzyme catalyses 2 H2O2 = O2 + 2 H2O. In terms of biological role, catalyzes the degradation of hydrogen peroxide (H(2)O(2)) generated by peroxisomal oxidases to water and oxygen, thereby protecting cells from the toxic effects of hydrogen peroxide. The chain is Peroxisomal catalase (POX9) from Candida tropicalis (Yeast).